The primary structure comprises 396 residues: Mitogen-activated protein kinase mpkC (396 aa).

The Protein kinase domain maps to 20-299; sequence YSDLQPVGLG…AAKALEHPYL (280 aa). Residues 26 to 34 and K49 each bind ATP; that span reads VGLGAFGLV. The Proton acceptor role is filled by D141. T171 is modified (phosphothreonine). Positions 171 to 173 match the TXY motif; that stretch reads TGY. A Phosphotyrosine modification is found at Y173.

Belongs to the protein kinase superfamily. Ser/Thr protein kinase family. MAP kinase subfamily. HOG1 sub-subfamily. Mg(2+) is required as a cofactor. Post-translationally, dually phosphorylated on Thr-171 and Tyr-173, which activates the enzyme.

The catalysed reaction is L-seryl-[protein] + ATP = O-phospho-L-seryl-[protein] + ADP + H(+). It catalyses the reaction L-threonyl-[protein] + ATP = O-phospho-L-threonyl-[protein] + ADP + H(+). With respect to regulation, activated by tyrosine and threonine phosphorylation. Mitogen-activated protein kinase required for growth on media where sorbitol or mannitol is the sole carbon source. The protein is Mitogen-activated protein kinase mpkC (mpkC) of Aspergillus niger (strain ATCC MYA-4892 / CBS 513.88 / FGSC A1513).